The primary structure comprises 263 residues: 4-hydroxy-2-oxo-heptane-1,7-dioate aldolase (263 aa).

The active-site Proton acceptor is the histidine 45. Glutamine 147 is a binding site for substrate. Glutamate 149 is a binding site for a divalent metal cation. The substrate site is built by alanine 174 and aspartate 175. Aspartate 175 lines the a divalent metal cation pocket.

The protein belongs to the HpcH/HpaI aldolase family. As to quaternary structure, homohexamer; trimer of dimers. A divalent metal cation is required as a cofactor.

The catalysed reaction is 4-hydroxy-2-oxoheptanedioate = succinate semialdehyde + pyruvate. Its pathway is aromatic compound metabolism; 4-hydroxyphenylacetate degradation; pyruvate and succinate semialdehyde from 4-hydroxyphenylacetate: step 7/7. Functionally, catalyzes the reversible retro-aldol cleavage of 4-hydroxy-2-ketoheptane-1,7-dioate (HKHD) to pyruvate and succinic semialdehyde. In Salmonella enteritidis PT4 (strain P125109), this protein is 4-hydroxy-2-oxo-heptane-1,7-dioate aldolase.